The following is a 291-amino-acid chain: Protein SpdB (291 aa).

3 consecutive transmembrane segments (helical) span residues 24 to 44 (VVVIVMWLGEAMPWAVALVVG), 71 to 91 (ITGVGWGFGAVATGVLVAHAL), and 99 to 119 (WLAVAWLPLAAKALWLVHGLW).

The protein localises to the cell membrane. Its function is as follows. Involved in plasmid transfer. The polypeptide is Protein SpdB (spdB) (Streptomyces lividans).